A 286-amino-acid polypeptide reads, in one-letter code: Bifunctional protein FolD 2 (286 aa).

Residues glycine 165–glycine 167, threonine 192, and isoleucine 233 each bind NADP(+).

It belongs to the tetrahydrofolate dehydrogenase/cyclohydrolase family. In terms of assembly, homodimer.

The catalysed reaction is (6R)-5,10-methylene-5,6,7,8-tetrahydrofolate + NADP(+) = (6R)-5,10-methenyltetrahydrofolate + NADPH. It carries out the reaction (6R)-5,10-methenyltetrahydrofolate + H2O = (6R)-10-formyltetrahydrofolate + H(+). It functions in the pathway one-carbon metabolism; tetrahydrofolate interconversion. In terms of biological role, catalyzes the oxidation of 5,10-methylenetetrahydrofolate to 5,10-methenyltetrahydrofolate and then the hydrolysis of 5,10-methenyltetrahydrofolate to 10-formyltetrahydrofolate. This is Bifunctional protein FolD 2 from Salinispora arenicola (strain CNS-205).